A 370-amino-acid chain; its full sequence is Keratin-associated protein 10-7 (370 aa).

The 30 X 5 AA repeats of C-C-X(3) stretch occupies residues 36-363 (DCPESCCEPP…CSRPACCGPT (328 aa)). Repeat copies occupy residues 41–45 (CCEPP), 46–50 (CCAPA), 67–71 (CCRVT), 89–93 (CCQQS), 99–103 (CCASS), 109–113 (CCVPV), 114–118 (CCKTV), 119–123 (CCKPV), 135–139 (CCQQS), 145–149 (CCTSS), 155–159 (CCVPI), 160–164 (CCKPV), 172–176 (CCQQS), 186–190 (CCQAV), 208–212 (CCQQS), 218–222 (CCTSS), 228–232 (CCVPV), 233–237 (CCKPV), 238–242 (CCVPT), 250–254 (CCQPA), 255–259 (CCTSS), 265–269 (CCVPV), 270–274 (CCKPV), 275–279 (CCVPV), 287–291 (CCQQS), 297–301 (CCTTS), 302–306 (CCRPS), 321–325 (CCVPV), 339–343 (CCRPA), and 359–363 (CCGPT).

It belongs to the KRTAP type 10 family. Interacts with hair keratins. Restricted to a narrow region of the hair fiber cuticle, lying approximately 20 cell layers above the apex of the dermal papilla of the hair root; not detected in any other tissues.

Its function is as follows. In the hair cortex, hair keratin intermediate filaments are embedded in an interfilamentous matrix, consisting of hair keratin-associated proteins (KRTAP), which are essential for the formation of a rigid and resistant hair shaft through their extensive disulfide bond cross-linking with abundant cysteine residues of hair keratins. The matrix proteins include the high-sulfur and high-glycine-tyrosine keratins. In Homo sapiens (Human), this protein is Keratin-associated protein 10-7 (KRTAP10-7).